The primary structure comprises 269 residues: Chromophore lyase CRL, chloroplastic (269 aa).

The helical transmembrane segment at 19–36 (ARGLVVKTLVLIGGALLI) threads the bilayer.

Belongs to the CpcT/CpeT biliprotein lyase family. In terms of tissue distribution, mostly expressed in shoot apices, to a lower extent, in leaves, inflorescence stems, buds and cotyledons, and, at low levels, in roots and siliques.

It localises to the plastid. The protein resides in the chloroplast outer membrane. Functionally, covalently attaches a chromophore to Cys residue(s) of phycobiliproteins. Required for plastid division, and involved in cell differentiation and regulation of the cell division plane. Maintenance of plastid homeostasis controls plant preconditioning to stress and stress acclimation. Its function is as follows. Confers sensitivity to cabbage leaf curl virus (CaLCuV), probably by supporting viral movement. In Arabidopsis thaliana (Mouse-ear cress), this protein is Chromophore lyase CRL, chloroplastic (CRL).